Consider the following 999-residue polypeptide: Lysosomal alpha-mannosidase (999 aa).

The segment at Met1–Ser25 is disordered. A signal peptide spans Met1–Ala50. Residues His73 and Asp75 each contribute to the Zn(2+) site. An N-linked (GlcNAc...) asparagine glycan is attached at Asn134. Residue Asp197 participates in Zn(2+) binding. The Nucleophile role is filled by Asp197. Residues Cys269 and Cys274 are joined by a disulfide bond. N-linked (GlcNAc...) asparagine glycosylation is present at Asn369. Residue His448 participates in Zn(2+) binding. Cys495 and Cys503 form a disulfide bridge. An N-linked (GlcNAc...) asparagine glycan is attached at Asn499. A propeptide spanning residues Ser591–Asn621 is cleaved from the precursor. 5 N-linked (GlcNAc...) asparagine glycosylation sites follow: Asn634, Asn640, Asn681, Asn755, and Asn919.

The protein belongs to the glycosyl hydrolase 38 family. As to quaternary structure, homodimer. It depends on Zn(2+) as a cofactor. In terms of processing, processed into 5 peptides of 35/38 kDa (A), 11/13 kDa (B) and 22 kDa (C), 38 kDa (D) and 13/15 kDa (E). The A, B and C peptides are disulfide-linked into a 67 kDa complex. Post-translationally, heavily glycosylated. Some sugar chains are of the high-mannose type.

It is found in the lysosome. It carries out the reaction Hydrolysis of terminal, non-reducing alpha-D-mannose residues in alpha-D-mannosides.. Its function is as follows. Necessary for the catabolism of N-linked carbohydrates released during glycoprotein turnover. This Bos taurus (Bovine) protein is Lysosomal alpha-mannosidase (MAN2B1).